Reading from the N-terminus, the 274-residue chain is Large ribosomal subunit protein uL2 (274 aa).

Residues 223–265 (VVMNPVDHPHGGGEGRTSGGRHPVSPWGMPTKGFKTRKNKRTD) form a disordered region. Positions 256–265 (FKTRKNKRTD) are enriched in basic residues.

It belongs to the universal ribosomal protein uL2 family. As to quaternary structure, part of the 50S ribosomal subunit. Forms a bridge to the 30S subunit in the 70S ribosome.

In terms of biological role, one of the primary rRNA binding proteins. Required for association of the 30S and 50S subunits to form the 70S ribosome, for tRNA binding and peptide bond formation. It has been suggested to have peptidyltransferase activity; this is somewhat controversial. Makes several contacts with the 16S rRNA in the 70S ribosome. This Vibrio parahaemolyticus serotype O3:K6 (strain RIMD 2210633) protein is Large ribosomal subunit protein uL2.